A 214-amino-acid chain; its full sequence is Rac-like GTP-binding protein 3 (214 aa).

Gly-15–Thr-22 lines the GTP pocket. Residues Tyr-37–Phe-45 carry the Effector region motif. GTP-binding positions include Asp-62–Gln-66 and Thr-120–Asp-123.

The protein belongs to the small GTPase superfamily. Rho family. May be palmitoylated.

It localises to the cytoplasm. It is found in the membrane. In terms of biological role, inactive GDP-bound Rho GTPases reside in the cytosol, are found in a complex with Rho GDP-dissociation inhibitors (Rho GDIs), and are released from the GDI protein in order to translocate to membranes upon activation. The polypeptide is Rac-like GTP-binding protein 3 (RAC3) (Oryza sativa subsp. japonica (Rice)).